The sequence spans 264 residues: Thymidylate synthase (264 aa).

Arg-21 serves as a coordination point for dUMP. A (6R)-5,10-methylene-5,6,7,8-tetrahydrofolate-binding site is contributed by His-51. DUMP is bound at residue 126 to 127 (RR). Residue Cys-146 is the Nucleophile of the active site. DUMP contacts are provided by residues 166–169 (RSAD), Asn-177, and 207–209 (HLY). Asp-169 serves as a coordination point for (6R)-5,10-methylene-5,6,7,8-tetrahydrofolate. Ala-263 contributes to the (6R)-5,10-methylene-5,6,7,8-tetrahydrofolate binding site.

This sequence belongs to the thymidylate synthase family. Bacterial-type ThyA subfamily. Homodimer.

It localises to the cytoplasm. It carries out the reaction dUMP + (6R)-5,10-methylene-5,6,7,8-tetrahydrofolate = 7,8-dihydrofolate + dTMP. The protein operates within pyrimidine metabolism; dTTP biosynthesis. Functionally, catalyzes the reductive methylation of 2'-deoxyuridine-5'-monophosphate (dUMP) to 2'-deoxythymidine-5'-monophosphate (dTMP) while utilizing 5,10-methylenetetrahydrofolate (mTHF) as the methyl donor and reductant in the reaction, yielding dihydrofolate (DHF) as a by-product. This enzymatic reaction provides an intracellular de novo source of dTMP, an essential precursor for DNA biosynthesis. This chain is Thymidylate synthase, found in Legionella pneumophila (strain Corby).